The sequence spans 222 residues: Ethylene-inducing xylanase 2 (222 aa).

An N-terminal signal peptide occupies residues 1–19 (MITFSSLLVTFSAISTSLA). The 187-residue stretch at 36 to 222 (QRNESSLVRR…GEGAATQTVS (187 aa)) folds into the GH11 domain. N-linked (GlcNAc...) asparagine glycans are attached at residues N38 and N94. The Nucleophile role is filled by E120. E209 serves as the catalytic Proton donor.

This sequence belongs to the glycosyl hydrolase 11 (cellulase G) family.

It carries out the reaction Endohydrolysis of (1-&gt;4)-beta-D-xylosidic linkages in xylans.. Its pathway is glycan degradation; xylan degradation. Functionally, endo-1,4-beta-xylanase involved in the hydrolysis of xylan, a major structural heterogeneous polysaccharide found in plant biomass representing the second most abundant polysaccharide in the biosphere, after cellulose. May act as an elicitor of plant defense responses in certain plants but does not exhibit any cell death when transiently expressed in N.benthamiana. The sequence is that of Ethylene-inducing xylanase 2 from Botryotinia fuckeliana (strain B05.10) (Noble rot fungus).